The following is a 953-amino-acid chain: Valine--tRNA ligase (953 aa).

A 'HIGH' region motif is present at residues 42 to 52; the sequence is PNVTGSLHMGH. The short motif at 554-558 is the 'KMSKS' region element; the sequence is KMSKS. Lys557 contacts ATP. Positions 884–953 form a coiled coil; sequence LIDKDAELAR…EAQKETIAAL (70 aa).

The protein belongs to the class-I aminoacyl-tRNA synthetase family. ValS type 1 subfamily. In terms of assembly, monomer.

Its subcellular location is the cytoplasm. The catalysed reaction is tRNA(Val) + L-valine + ATP = L-valyl-tRNA(Val) + AMP + diphosphate. Its function is as follows. Catalyzes the attachment of valine to tRNA(Val). As ValRS can inadvertently accommodate and process structurally similar amino acids such as threonine, to avoid such errors, it has a 'posttransfer' editing activity that hydrolyzes mischarged Thr-tRNA(Val) in a tRNA-dependent manner. The polypeptide is Valine--tRNA ligase (Photobacterium profundum (strain SS9)).